The following is a 582-amino-acid chain: Potassium voltage-gated channel subfamily KQT member 1 (582 aa).

Topologically, residues 1–31 (RVSIYSARRPLLARTHIQGRVYNFLERPTGW) are cytoplasmic. Residues 32-53 (KCFVYHFAVFLIVLVCLIFSVL) traverse the membrane as a helical segment. The Extracellular segment spans residues 54 to 64 (STIEQYVALAT). Residues 65 to 87 (GTLFWMEIVLVVFFGTEYVVRLW) form a helical membrane-spanning segment. At 88-103 (SAGCRSKYVGVWGRLR) the chain is on the cytoplasmic side. The chain crosses the membrane as a helical span at residues 104 to 129 (FARKPISIIDLIVVLASMVVLCVGSK). The Extracellular segment spans residues 130-137 (GQVFATSA). A helical; Voltage-sensor membrane pass occupies residues 138-153 (IRGIRFLQILRMLHVD). The tract at residues 149–157 (MLHVDRQGG) is interaction with KCNE3. At 154-171 (RQGGTWRLLGSVVFIHRQ) the chain is on the cytoplasmic side. An a 1,2-diacyl-sn-glycero-3-phospho-(1D-myo-inositol-4,5-bisphosphate)-binding site is contributed by Gln-155. A helical membrane pass occupies residues 172–194 (ELITTLYIGFLGLIFSSYFVYLA). Topologically, residues 195–210 (EKDAVNESGQVEFGSY) are extracellular. Asn-200 is a glycosylation site (N-linked (GlcNAc...) asparagine). The pore-forming intramembrane region spans 211-231 (ADALWWGVVTVTTIGYGDKVP). At 232–233 (QT) the chain is on the extracellular side. The chain crosses the membrane as a helical span at residues 234 to 259 (WVGKTIASCFSVFAISFFALPAGILG). Topologically, residues 260–582 (SGFALKVQQK…VPRRGPEEGS (323 aa)) are cytoplasmic. The segment at 281–293 (AAASLIQTAWRCY) is interaction with CALM. A phosphoserine mark is found at Ser-318 and Ser-320. The interaction with CALM; calcium-dependent stretch occupies residues 426 to 440 (KVIRRMQYFVAKKKF). The tract at residues 446-483 (PYDVRDVIEQYSQGHLNLMVRIKELQRRLDQSIGKPSL) is interaction with KCNE1 C-terminus. The stretch at 496–532 (SNTIGARLNRVEDKVAQLDQRLVLITDMLQQLLSLHH) forms a coiled coil. The interval 499–527 (IGARLNRVEDKVAQLDQRLVLITDMLQQL) is interaction with AKAP9. The C-terminal assembly domain (tetramerization) stretch occupies residues 500–531 (GARLNRVEDKVAQLDQRLVLITDMLQQLLSLH). Residues 530–582 (LHHGGPPGSRPPSGGGAQVQPCGPTNPELFLPGNALPTYEQLTVPRRGPEEGS) are disordered.

This sequence belongs to the potassium channel family. KQT (TC 1.A.1.15) subfamily. Kv7.1/KCNQ1 sub-subfamily. In terms of assembly, tetramer. Heterotetramer with KCNE1; targets to the membrane raft. Interacts (via C-terminus) with CALM; forms a heterooctameric structure (with 4:4 KCNQ1:CALM stoichiometry) in a calcium-independent manner. Interacts with AKAP9; targets protein kinase A (PKA) catalytic and regulatory subunits and protein phosphatase 1 (PP1) to the KCNQ1-KCNE1 complex, allowing PKA-mediated phosphorylation and increase of delayed rectifier potassium channel activity. Interacts with KCNE2; form a heterooligomer complex that targets to the membrane raft and leading to currents with an apparently instantaneous activation, a rapid deactivation process and a linear current-voltage relationship and decreases the amplitude of the outward current. Interacts with AP2M1; mediates estrogen-induced internalization via clathrin-coated vesicles. Interacts with NEDD4L; promotes internalization and decreases I(Ks) currents. Interacts with USP2; counteracts the NEDD4L-specific down-regulation of I(Ks) and restore plasma membrane localization. Heterotetramer with KCNQ5; has a voltage-gated potassium channel activity. Interacts with KCNE3; four KCNE3 molecules are bound to one KCNQ1 tetramer (4:4 KCNQ1:KCNE3 stoichiometry); alters membrane raft localization; affects KCNQ1 structure and gating properties. Interacts with KCNE4; impairs KCNQ1 localization in lipid rafts and inhibits voltage-gated potassium channel activity. Interacts with KCNE5; impairs KCNQ1 localization in lipid rafts and only conducts current upon strong and continued depolarization. Post-translationally, phosphorylated by PKA; increases delayed rectifier potassium channel activity of the KCNQ1-KCNE1 complex through a macromolecular complex that includes PKA, PP1, and the targeting protein AKAP9. Ubiquitinated by NEDD4L; promotes internalization. The ubiquitinylated form is internalized through a clathrin-mediated endocytosis by interacting with AP2M1 and is recycled back to the cell membrane via RAB4A and RAB11A. In terms of processing, deubiquitinated by USP2; counteracts the NEDD4L-specific down-regulation of I(Ks) and restores the membrane localization.

It is found in the cell membrane. It localises to the cytoplasmic vesicle membrane. The protein resides in the early endosome. Its subcellular location is the membrane raft. The protein localises to the endoplasmic reticulum. It is found in the basolateral cell membrane. It carries out the reaction K(+)(in) = K(+)(out). Its activity is regulated as follows. PIP2 molecule is essential to activate KCNQ channels by inducing the coupling of the voltage-sensing domain (VSD) and the pore-forming domain (PD). Upon channel activation, PIP2 disrupts the VSD-calmodulin/CALM interactions, causing the release of CALM from the VSD which triggers the opening of the gate. Calcium potentiates KCNQ1 channel current through calcium-bound CALM. Calcium-bound CALM competes with PIP2 to stabilize the channel open state. Its function is as follows. Pore-forming subunit of the voltage-gated potassium (Kv) channel involved in the regulation of cardiomyocyte excitability and important in normal development and functions of myocardium, inner ear, stomach and colon. Associates with KCNE beta subunits that modulates current kinetics. Induces a voltage-dependent by rapidly activating and slowly deactivating potassium-selective outward current. Also promotes a delayed voltage activated potassium current showing outward rectification characteristic. During beta-adrenergic receptor stimulation participates in cardiac repolarization by associating with KCNE1 to form the I(Ks) cardiac potassium current that increases the amplitude and slows down the activation kinetics of outward potassium current I(Ks). Muscarinic agonist oxotremorine-M strongly suppresses KCNQ1/KCNE1 current. When associated with KCNE3, forms the potassium channel that is important for cyclic AMP-stimulated intestinal secretion of chloride ions. This interaction with KCNE3 is reduced by 17beta-estradiol, resulting in the reduction of currents. During conditions of increased substrate load, maintains the driving force for proximal tubular and intestinal sodium ions absorption, gastric acid secretion, and cAMP-induced jejunal chloride ions secretion. Allows the provision of potassium ions to the luminal membrane of the secretory canaliculus in the resting state as well as during stimulated acid secretion. When associated with KCNE2, forms a heterooligomer complex leading to currents with an apparently instantaneous activation, a rapid deactivation process and a linear current-voltage relationship and decreases the amplitude of the outward current. When associated with KCNE4, inhibits voltage-gated potassium channel activity. When associated with KCNE5, this complex only conducts current upon strong and continued depolarization. Also forms a heterotetramer with KCNQ5 that has a voltage-gated potassium channel activity. Binds with phosphatidylinositol 4,5-bisphosphate. The protein is Potassium voltage-gated channel subfamily KQT member 1 of Felis catus (Cat).